Reading from the N-terminus, the 162-residue chain is Nucleotide-binding protein Francci3_0558 (162 aa).

The protein belongs to the YajQ family.

Functionally, nucleotide-binding protein. This chain is Nucleotide-binding protein Francci3_0558, found in Frankia casuarinae (strain DSM 45818 / CECT 9043 / HFP020203 / CcI3).